Consider the following 138-residue polypeptide: ATP synthase epsilon chain (138 aa).

This sequence belongs to the ATPase epsilon chain family. In terms of assembly, F-type ATPases have 2 components, CF(1) - the catalytic core - and CF(0) - the membrane proton channel. CF(1) has five subunits: alpha(3), beta(3), gamma(1), delta(1), epsilon(1). CF(0) has three main subunits: a, b and c.

Its subcellular location is the cell inner membrane. In terms of biological role, produces ATP from ADP in the presence of a proton gradient across the membrane. The protein is ATP synthase epsilon chain of Geotalea uraniireducens (strain Rf4) (Geobacter uraniireducens).